A 116-amino-acid chain; its full sequence is Flagellar transcriptional regulator FlhD (116 aa).

The protein belongs to the FlhD family. Homodimer; disulfide-linked. Forms a heterohexamer composed of two FlhC and four FlhD subunits. Each FlhC binds a FlhD dimer, forming a heterotrimer, and a hexamer assembles by dimerization of two heterotrimers.

It localises to the cytoplasm. Its function is as follows. Functions in complex with FlhC as a master transcriptional regulator that regulates transcription of several flagellar and non-flagellar operons by binding to their promoter region. Activates expression of class 2 flagellar genes, including fliA, which is a flagellum-specific sigma factor that turns on the class 3 genes. Also regulates genes whose products function in a variety of physiological pathways. In Pectobacterium carotovorum subsp. carotovorum (strain PC1), this protein is Flagellar transcriptional regulator FlhD.